A 247-amino-acid chain; its full sequence is MSEQSQLDDSTIDKLIPQIFNEMRSNLNNTTNKFPKSTGGGASDNISANSNSIRSFNSITTQSLLKESESLDKITAMIKNVTAALKNNLPVYVNQVHEVCKSTNSILDSWINIHSQAGYIHKLMSDQTYLKLINDRLHNENVNTNDEDGSTLHNVIALKKKEILDLRQKLENRKGEKDAAPAKPPNQGLNPRYGVQSGRRPVPSAGISNNGRVRKTHVPASKRPSGIPRVTNRWTKPTASSSRKMFR.

Serine 2 carries the post-translational modification N-acetylserine. Disordered stretches follow at residues 27 to 47 (LNNT…DNIS) and 172 to 247 (NRKG…KMFR). Positions 152–180 (LHNVIALKKKEILDLRQKLENRKGEKDAA) form a coiled coil. Positions 232-247 (NRWTKPTASSSRKMFR) are enriched in polar residues.

It belongs to the DASH complex DUO1 family. As to quaternary structure, component of the DASH complex consisting of ASK1, DAD1, DAD2, DAD3, DAD4, DAM1, DUO1, HSK3, SPC19 and SPC34, with a stoichiometry of one copy of each subunit per complex. Multiple DASH complexes oligomerize to form a ring that encircles spindle microtubules and organizes the rod-like NDC80 complexes of the outer kinetochore. DASH complex oligomerization strengthens microtubule attachments. On cytoplasmic microtubules, DASH complexes appear to form patches instead of rings. Within the complex, DAM1 and DUO1 may form the microtubule connections.

The protein localises to the nucleus. It is found in the cytoplasm. The protein resides in the cytoskeleton. Its subcellular location is the spindle pole. It localises to the chromosome. The protein localises to the centromere. It is found in the kinetochore. Functionally, component of the DASH complex that connects microtubules with kinetochores and couples microtubule depolymerisation to chromosome movement; it is involved in retrieving kinetochores to the spindle poles before their re-orientation on the spindle in early mitosis and allows microtubule depolymerization to pull chromosomes apart and resist detachment during anaphase. Kinetochores, consisting of a centromere-associated inner segment and a microtubule-contacting outer segment, play a crucial role in chromosome segregation by mediating the physical connection between centromeric DNA and microtubules. Kinetochores also serve as an input point for the spindle assembly checkpoint, which delays anaphase until all chromosomes have bioriented on the mitotic spindle. During spindle-kinetochore attachment, kinetochores first attach to the lateral surface of spindle microtubules, which supports the congression of chromosomes toward the middle of the dividing cell; they then slide along towards the spindle pole, a process independent of the DASH complex but requiring the NDC80 complex. When the end of a disassembling microtubule reaches the laterally attached kinetochore, the DASH complex together with the NDC80 complex and STU2 convert lateral attachment to end-on capture to produce a structure that can track with microtubule shortening and sustain attachment when tension is applied across sister kinetochores upon their biorientation. Microtubule depolymerization proceeds by protofilament splaying and induces the kinetochore-attached DASH complex to slide longitudinally, thereby helping to transduce depolymerization energy into pulling forces to disjoin chromatids. Incorrect microtubule attachments are corrected by releasing microubules from the kinetochore through phosphorylation by IPL1 of kinetochore components. Links the microtubule cytoskeleton to chromosomes during interphase. Also contributes to the poleward transport of kinetochores on microtubules following centromeric DNA replication in S-phase. This chain is DASH complex subunit DUO1 (DUO1), found in Saccharomyces cerevisiae (strain ATCC 204508 / S288c) (Baker's yeast).